Here is a 225-residue protein sequence, read N- to C-terminus: MSNLCVLFFQFFFLAQFFAEASPLTFELNKGRKECLYTLTPEIDCTISYYFAVQQGESNDFDVNYEIFAPDDKNKPIIERSGERQGEWSFIGQHKGEYAICFYGGKAHDKIVDLDFKYNCERQDDIRNERRKARKAQRNLRDSKTDPLQDSVENSIDTIERQLHVLERNIQYYKSRNTRNHHTVCSTEHRIVMFSIYGILLIIGMSCAQIAILEFIFRESRKHNV.

Residues 1-23 (MSNLCVLFFQFFFLAQFFAEASP) form the signal peptide. Residues 24 to 195 (LTFELNKGRK…STEHRIVMFS (172 aa)) are Lumenal-facing. A GOLD domain is found at 33-172 (KECLYTLTPE…LHVLERNIQY (140 aa)). Over residues 129–138 (ERRKARKAQR) the composition is skewed to basic residues. The interval 129 to 149 (ERRKARKAQRNLRDSKTDPLQ) is disordered. The chain crosses the membrane as a helical span at residues 196–216 (IYGILLIIGMSCAQIAILEFI). Residues 217–225 (FRESRKHNV) are Cytoplasmic-facing.

It belongs to the EMP24/GP25L family.

Its subcellular location is the endoplasmic reticulum membrane. Functionally, involved in vesicular protein trafficking. This chain is Protein ERP3 (ERP3), found in Saccharomyces cerevisiae (strain ATCC 204508 / S288c) (Baker's yeast).